A 427-amino-acid polypeptide reads, in one-letter code: 3-phosphoshikimate 1-carboxyvinyltransferase (427 aa).

Residues K22, S23, and R27 each coordinate 3-phosphoshikimate. Position 22 (K22) interacts with phosphoenolpyruvate. Phosphoenolpyruvate is bound by residues G93 and R122. Residues S167, Q169, D315, and K342 each coordinate 3-phosphoshikimate. Q169 provides a ligand contact to phosphoenolpyruvate. The active-site Proton acceptor is D315. Residues R346 and R387 each contribute to the phosphoenolpyruvate site.

This sequence belongs to the EPSP synthase family. Monomer.

The protein localises to the cytoplasm. The enzyme catalyses 3-phosphoshikimate + phosphoenolpyruvate = 5-O-(1-carboxyvinyl)-3-phosphoshikimate + phosphate. The protein operates within metabolic intermediate biosynthesis; chorismate biosynthesis; chorismate from D-erythrose 4-phosphate and phosphoenolpyruvate: step 6/7. Catalyzes the transfer of the enolpyruvyl moiety of phosphoenolpyruvate (PEP) to the 5-hydroxyl of shikimate-3-phosphate (S3P) to produce enolpyruvyl shikimate-3-phosphate and inorganic phosphate. The chain is 3-phosphoshikimate 1-carboxyvinyltransferase from Thermus thermophilus (strain ATCC BAA-163 / DSM 7039 / HB27).